A 315-amino-acid chain; its full sequence is Replication factor C small subunit (315 aa).

Position 43–50 (43–50 (GSPGVGKT)) interacts with ATP.

Belongs to the activator 1 small subunits family. RfcS subfamily. In terms of assembly, heteromultimer composed of small subunits (RfcS) and large subunits (RfcL).

Functionally, part of the RFC clamp loader complex which loads the PCNA sliding clamp onto DNA. This is Replication factor C small subunit from Methanococcus maripaludis (strain C5 / ATCC BAA-1333).